The following is a 428-amino-acid chain: Trigger factor (428 aa).

The PPIase FKBP-type domain occupies G163–P248.

This sequence belongs to the FKBP-type PPIase family. Tig subfamily.

It localises to the cytoplasm. The enzyme catalyses [protein]-peptidylproline (omega=180) = [protein]-peptidylproline (omega=0). In terms of biological role, involved in protein export. Acts as a chaperone by maintaining the newly synthesized protein in an open conformation. Functions as a peptidyl-prolyl cis-trans isomerase. In Ruminiclostridium cellulolyticum (strain ATCC 35319 / DSM 5812 / JCM 6584 / H10) (Clostridium cellulolyticum), this protein is Trigger factor.